A 301-amino-acid polypeptide reads, in one-letter code: tRNA dimethylallyltransferase 1 (301 aa).

Position 11 to 18 (11 to 18 (GPTGVGKT)) interacts with ATP. Residue 13-18 (TGVGKT) participates in substrate binding. The segment at 36-39 (DSRQ) is interaction with substrate tRNA.

The protein belongs to the IPP transferase family. As to quaternary structure, monomer. Mg(2+) serves as cofactor.

The enzyme catalyses adenosine(37) in tRNA + dimethylallyl diphosphate = N(6)-dimethylallyladenosine(37) in tRNA + diphosphate. Functionally, catalyzes the transfer of a dimethylallyl group onto the adenine at position 37 in tRNAs that read codons beginning with uridine, leading to the formation of N6-(dimethylallyl)adenosine (i(6)A). This is tRNA dimethylallyltransferase 1 from Bacteroides fragilis (strain YCH46).